Here is a 188-residue protein sequence, read N- to C-terminus: Inosine triphosphate pyrophosphatase (188 aa).

Residue 12 to 17 (TGNKNK) coordinates ITP. E40 contacts Mg(2+). Residues K52, 68 to 69 (DT), K85, 144 to 147 (FGWD), K165, and 170 to 171 (HR) each bind ITP.

Belongs to the HAM1 NTPase family. In terms of assembly, homodimer. Mg(2+) serves as cofactor. Requires Mn(2+) as cofactor.

It localises to the cytoplasm. It is found in the nucleus. It carries out the reaction ITP + H2O = IMP + diphosphate + H(+). It catalyses the reaction dITP + H2O = dIMP + diphosphate + H(+). The catalysed reaction is XTP + H2O = XMP + diphosphate + H(+). Pyrophosphatase that hydrolyzes non-canonical purine nucleotides such as inosine triphosphate (ITP), deoxyinosine triphosphate (dITP) or xanthosine 5'-triphosphate (XTP) to their respective monophosphate derivatives. The enzyme does not distinguish between the deoxy- and ribose forms. Probably excludes non-canonical purines from RNA and DNA precursor pools, thus preventing their incorporation into RNA and DNA and avoiding chromosomal lesions. The protein is Inosine triphosphate pyrophosphatase of Phaeosphaeria nodorum (strain SN15 / ATCC MYA-4574 / FGSC 10173) (Glume blotch fungus).